The following is a 436-amino-acid chain: MNNIFPIMSLLFKQLYSRQGKKDAIRIAAGLVILAVFEIGLIRQAGIDESVLGKTYIILALLLMNTYMVFLSVTSQWKESYMKLSCLLPISSRSFWLAQSVVLFVDTCLRRTLFFFILPLFLFGNGTLSGAQTLFWLGRFSFFTVYSILFGVMLSNHFVKKKNSMFLLHAAVFAFVCLSAAFMPAVTIPLCAVHMLWAVIIDFPVFLQAPPHQSKMHFFMRRSEFSFYKREWNRFISSKAMLLNYVVMAAFSGFFSFQMMNTGIFNQQVIYIVISALLLICSPIALLYSIEKNDRMLLITLPIKRRTMFWAKYRFYSGLLAGGFLLVAIIVGFISGRPISALTFVQCMELLLAGAFIRLTADEKRPSFGWQTEQQLWSGFSKYRSYLFCLPLFLATLAGTAVSLAVIPIAALIIVYYLQKQDGGFFDTSKRERIGS.

10 consecutive transmembrane segments (helical) span residues 27–47 (IAAG…QAGI), 51–71 (VLGK…MVFL), 112–132 (TLFF…SGAQ), 134–154 (LFWL…GVML), 166–186 (FLLH…MPAV), 187–207 (TIPL…PVFL), 240–260 (AMLL…FQMM), 270–290 (IYIV…LYSI), 315–335 (FYSG…GFIS), and 395–415 (ATLA…LIIV).

Its subcellular location is the cell membrane. In terms of biological role, involved in the production of the bacteriocin subtilosin. Required for immunity to subtilosin. This Bacillus subtilis protein is Antilisterial bacteriocin subtilosin biosynthesis protein AlbD (albD).